Here is a 146-residue protein sequence, read N- to C-terminus: Holo-[acyl-carrier-protein] synthase (146 aa).

Mg(2+)-binding residues include aspartate 8 and glutamate 61.

It belongs to the P-Pant transferase superfamily. AcpS family. The cofactor is Mg(2+).

The protein resides in the cytoplasm. It catalyses the reaction apo-[ACP] + CoA = holo-[ACP] + adenosine 3',5'-bisphosphate + H(+). In terms of biological role, transfers the 4'-phosphopantetheine moiety from coenzyme A to a Ser of acyl-carrier-protein. The polypeptide is Holo-[acyl-carrier-protein] synthase (Rhodopseudomonas palustris (strain ATCC BAA-98 / CGA009)).